Consider the following 354-residue polypeptide: MQFIDHAEIEVIAGKGGDGIVAFRREKYVPAGGPAGGNGGWGGSVIFRAEENLQTLLDFRYARTFKAQDGERGGPNNCTGASGEDLIVDVPCGTVIYDRETDEEIGDLVFHGQIFCVAKGGKGGLGNKHFLSNKNRAPEYALPGLEGEIKQLRLELKLLAEVGIIGLPNAGKSTLISALSAARPKIGAYPFTTLIPNLGVVKRPTGDGTVFADIPGLIEGAHQGVGLGHEFLRHIERTKVLVHLVDLNAEDPIKNYETIQGELEAYGRGLPELPQIIALNKLDAGDHEFADFITEELRRLTDAKILTISAVSRTGLEQLLQEIWDVLDYLKEISRNEAPETSVMDLESLHIADE.

An Obg domain is found at M1–L159. An OBG-type G domain is found at A160–D328. GTP contacts are provided by residues G166–S173, F191–I195, D213–G216, N280–D283, and S309–V311. Positions 173 and 193 each coordinate Mg(2+).

It belongs to the TRAFAC class OBG-HflX-like GTPase superfamily. OBG GTPase family. In terms of assembly, monomer. The cofactor is Mg(2+).

The protein localises to the cytoplasm. Functionally, an essential GTPase which binds GTP, GDP and possibly (p)ppGpp with moderate affinity, with high nucleotide exchange rates and a fairly low GTP hydrolysis rate. Plays a role in control of the cell cycle, stress response, ribosome biogenesis and in those bacteria that undergo differentiation, in morphogenesis control. The sequence is that of GTPase Obg from Picosynechococcus sp. (strain ATCC 27264 / PCC 7002 / PR-6) (Agmenellum quadruplicatum).